The chain runs to 186 residues: UPF0397 protein LCABL_04350 (186 aa).

5 helical membrane passes run 12–32 (VVAI…AVIP), 45–65 (GFLG…IGFL), 77–97 (TPWW…GLFW), 112–132 (IVSF…LIAP), and 150–170 (GIVS…ILLV).

It belongs to the UPF0397 family.

Its subcellular location is the cell membrane. The chain is UPF0397 protein LCABL_04350 from Lacticaseibacillus casei (strain BL23) (Lactobacillus casei).